A 786-amino-acid polypeptide reads, in one-letter code: Constitutive coactivator of peroxisome proliferator-activated receptor gamma (786 aa).

Residues 1-561 (MGVRGLQGFV…GTPSLEVLWL (561 aa)) form a mediates transactivation of PPARG region. Disordered regions lie at residues 371 to 413 (PNQE…KLPS) and 738 to 786 (HWDS…WRRY). The segment covering 750-771 (QGYSSYRTDSTHGHSGQSWRNQ) has biased composition (polar residues).

This sequence belongs to the constitutive coactivator of PPAR-gamma family. In terms of assembly, interacts with ESR1 and RXRA. Interacts with PPARG; in a ligand-independent manner. In terms of tissue distribution, ubiquitously expressed (at protein level).

It localises to the nucleus. Its function is as follows. Functions as a transactivator of PPARG and ESR1. Functions in adipogenesis through PPARG activation. The protein is Constitutive coactivator of peroxisome proliferator-activated receptor gamma (Fam120b) of Mus musculus (Mouse).